A 452-amino-acid chain; its full sequence is Probable glycine dehydrogenase (decarboxylating) subunit 1 (452 aa).

Belongs to the GcvP family. N-terminal subunit subfamily. In terms of assembly, the glycine cleavage system is composed of four proteins: P, T, L and H. In this organism, the P 'protein' is a heterodimer of two subunits.

The enzyme catalyses N(6)-[(R)-lipoyl]-L-lysyl-[glycine-cleavage complex H protein] + glycine + H(+) = N(6)-[(R)-S(8)-aminomethyldihydrolipoyl]-L-lysyl-[glycine-cleavage complex H protein] + CO2. Its function is as follows. The glycine cleavage system catalyzes the degradation of glycine. The P protein binds the alpha-amino group of glycine through its pyridoxal phosphate cofactor; CO(2) is released and the remaining methylamine moiety is then transferred to the lipoamide cofactor of the H protein. The chain is Probable glycine dehydrogenase (decarboxylating) subunit 1 from Nitrosospira multiformis (strain ATCC 25196 / NCIMB 11849 / C 71).